The sequence spans 972 residues: Aminopeptidase Ey (972 aa).

Residues 2–10 (AAGFFISKS) are Cytoplasmic-facing. The chain crosses the membrane as a helical; Signal-anchor for type II membrane protein span at residues 11 to 31 (VGIVGIVLALGAVATIIALSV). Over 32–972 (VYAQEKNKSS…AWFRAETASS (941 aa)) the chain is Extracellular. The cytosolic Ser/Thr-rich junction stretch occupies residues 33-72 (YAQEKNKSSGGSGGSDTTSTTTASTTTTSTTTASTTAAPN). The interval 37-77 (KNKSSGGSGGSDTTSTTTASTTTTSTTTASTTAAPNNPWNR) is disordered. Asparagine 38 is a glycosylation site (N-linked (GlcNAc...) asparagine). Residues 47-70 (SDTTSTTTASTTTTSTTTASTTAA) show a composition bias toward low complexity. The metalloprotease stretch occupies residues 73-967 (NPWNRWRLPT…KEVVHAWFRA (895 aa)). Residues asparagine 110, asparagine 132, asparagine 147, asparagine 206, asparagine 269, and asparagine 296 are each glycosylated (N-linked (GlcNAc...) asparagine). Substrate is bound at residue 355 to 359 (GAMEN). Residue histidine 391 coordinates Zn(2+). Glutamate 392 functions as the Proton acceptor in the catalytic mechanism. 2 residues coordinate Zn(2+): histidine 395 and glutamate 414. Asparagine 513, asparagine 574, asparagine 584, asparagine 628, asparagine 684, and asparagine 742 each carry an N-linked (GlcNAc...) asparagine glycan. An intrachain disulfide couples cysteine 764 to cysteine 771. Asparagine 785 carries an N-linked (GlcNAc...) asparagine glycan. Cysteine 801 and cysteine 837 are joined by a disulfide.

Belongs to the peptidase M1 family. Homodimer. It depends on Zn(2+) as a cofactor. As to expression, detected in the plasma and granule fractions of egg yolk (at protein level).

Its subcellular location is the cell membrane. The catalysed reaction is Differs from other aminopeptidases in broad specificity for amino acids in the P1 position and the ability to hydrolyze peptides of four or five residues that contain Pro in the P1' position.. Broad specificity aminopeptidase. Degrades a variety of peptides possessing various N-terminal amino acids including hydrophobic, basic and acidic amino acids. Preferentially hydrolyzes small peptides consisting of 4 or 5 amino acids. Hydrolyzes the N-terminal Xaa-Pro bonds in the chicken brain peptide Leu-Pro-Leu-Arg-PheNH2, the substance P fragment Arg-Pro-Lys-Pro and the bradykinin fragment Arg-Pro-Pro-Gly-Phe. Hydrolyzes the N-formylated peptides fMet-Leu-Phe, fMet-Ala-Gly-Ser-Glu and fMet-Nle-Leu-Phe-Nle-Tyr-Lys, but does not hydrolyze peptides with acetylation or pyroglutamic acid at N-terminus. Does not hydrolyze large peptides such as complete substance P, bradykinin or schistoFLRFamide. The protein is Aminopeptidase Ey (ANPEP) of Gallus gallus (Chicken).